The primary structure comprises 167 residues: MLTVALLALLCASASGNAIQARSSSYSGEYGGGGGKRFSHSGNQLDGPITALRVRVNTYYIVGLQVRYGKVWSDYVGGRNGDLEEIFLHPGESVIQVSGKYKWYLKKLVFVTDKGRYLSFGKDSGTSFNAVPLHPNTVLRFISGRSGSLIDAIGLHWDVYPSSCSRC.

The signal sequence occupies residues 1 to 16 (MLTVALLALLCASASG). The Jacalin-type lectin domain maps to 24–159 (SSYSGEYGGG…IDAIGLHWDV (136 aa)).

Belongs to the jacalin lectin family. As to expression, highly expressed in liver. Detected at lower levels in colon, ileum and jejunum.

Its subcellular location is the secreted. The protein localises to the extracellular space. It is found in the extracellular matrix. The protein resides in the zymogen granule lumen. It localises to the golgi apparatus lumen. Functionally, may play a role in protein trafficking. May act as a linker molecule between the submembranous matrix on the luminal side of zymogen granule membrane (ZGM) and aggregated secretory proteins during granule formation in the TGN. In Homo sapiens (Human), this protein is Zymogen granule membrane protein 16 (ZG16).